A 499-amino-acid polypeptide reads, in one-letter code: Bifunctional purine biosynthesis protein PurH (499 aa).

An MGS-like domain is found at 1–144 (MIKRALISVF…KNFKDVVVLT (144 aa)).

It belongs to the PurH family.

The enzyme catalyses (6R)-10-formyltetrahydrofolate + 5-amino-1-(5-phospho-beta-D-ribosyl)imidazole-4-carboxamide = 5-formamido-1-(5-phospho-D-ribosyl)imidazole-4-carboxamide + (6S)-5,6,7,8-tetrahydrofolate. It catalyses the reaction IMP + H2O = 5-formamido-1-(5-phospho-D-ribosyl)imidazole-4-carboxamide. The protein operates within purine metabolism; IMP biosynthesis via de novo pathway; 5-formamido-1-(5-phospho-D-ribosyl)imidazole-4-carboxamide from 5-amino-1-(5-phospho-D-ribosyl)imidazole-4-carboxamide (10-formyl THF route): step 1/1. Its pathway is purine metabolism; IMP biosynthesis via de novo pathway; IMP from 5-formamido-1-(5-phospho-D-ribosyl)imidazole-4-carboxamide: step 1/1. The chain is Bifunctional purine biosynthesis protein PurH from Clostridium botulinum (strain Kyoto / Type A2).